A 200-amino-acid polypeptide reads, in one-letter code: GTP-binding protein rho5 (200 aa).

13–20 (GDGACGKT) serves as a coordination point for GTP. Positions 35–43 (YVPTVFENY) match the Effector region motif. Residues 60 to 64 (DTAGQ) and 118 to 121 (CKVD) contribute to the GTP site. Cys197 bears the Cysteine methyl ester mark. Cys197 carries S-geranylgeranyl cysteine lipidation. A propeptide spans 198–200 (ILL) (removed in mature form).

The protein belongs to the small GTPase superfamily. Rho family.

Its subcellular location is the cell membrane. This is GTP-binding protein rho5 (rho5) from Schizosaccharomyces pombe (strain 972 / ATCC 24843) (Fission yeast).